The chain runs to 337 residues: Probable poly [ADP-ribose] polymerase DDB_G0278045 (337 aa).

In terms of domain architecture, PARP catalytic spans 21-231; it reads KKWDIIYKQR…NNNKNKNKNN (211 aa). A compositionally biased stretch (low complexity) spans 218-242; that stretch reads NNTNNNNKNKNKNNNKNNNKNIKIQ. The segment at 218–247 is disordered; the sequence is NNTNNNNKNKNKNNNKNNNKNIKIQNENKN.

The catalysed reaction is L-aspartyl-[protein] + NAD(+) = 4-O-(ADP-D-ribosyl)-L-aspartyl-[protein] + nicotinamide. It catalyses the reaction L-glutamyl-[protein] + NAD(+) = 5-O-(ADP-D-ribosyl)-L-glutamyl-[protein] + nicotinamide. It carries out the reaction NAD(+) + (ADP-D-ribosyl)n-acceptor = nicotinamide + (ADP-D-ribosyl)n+1-acceptor + H(+).. The polypeptide is Probable poly [ADP-ribose] polymerase DDB_G0278045 (Dictyostelium discoideum (Social amoeba)).